The sequence spans 389 residues: Dihydroorotase (389 aa).

The Zn(2+) site is built by H51 and H53. Residues H53 to R55 and N85 contribute to the substrate site. Zn(2+) contacts are provided by K133, H158, H192, and D254. At K133 the chain carries N6-carboxylysine. D254 is a catalytic residue. Substrate contacts are provided by residues H258 and P272–G273.

The protein belongs to the metallo-dependent hydrolases superfamily. DHOase family. Class I DHOase subfamily. Requires Zn(2+) as cofactor.

It catalyses the reaction (S)-dihydroorotate + H2O = N-carbamoyl-L-aspartate + H(+). The protein operates within pyrimidine metabolism; UMP biosynthesis via de novo pathway; (S)-dihydroorotate from bicarbonate: step 3/3. Catalyzes the reversible cyclization of carbamoyl aspartate to dihydroorotate. This is Dihydroorotase from Sulfurisphaera tokodaii (strain DSM 16993 / JCM 10545 / NBRC 100140 / 7) (Sulfolobus tokodaii).